Reading from the N-terminus, the 293-residue chain is Ribonuclease HII (293 aa).

The RNase H type-2 domain occupies 81–271 (THIAGVDEAG…VREALGLPTG (191 aa)). D87, E88, and D180 together coordinate a divalent metal cation. The disordered stretch occupies residues 273–293 (PPSALQAELFPEAPSRTGVKS).

Belongs to the RNase HII family. Requires Mn(2+) as cofactor. It depends on Mg(2+) as a cofactor.

The protein localises to the cytoplasm. It carries out the reaction Endonucleolytic cleavage to 5'-phosphomonoester.. Its function is as follows. Endonuclease that specifically degrades the RNA of RNA-DNA hybrids. The polypeptide is Ribonuclease HII (Myxococcus xanthus (strain DK1622)).